A 360-amino-acid chain; its full sequence is Phospho-N-acetylmuramoyl-pentapeptide-transferase (360 aa).

A run of 10 helical transmembrane segments spans residues 26–46 (AILS…IMIK), 70–90 (GTPT…ILLW), 94–114 (SNPY…VGFV), 132–152 (WKYF…YAYG), 168–188 (VMPQ…VGTS), 199–219 (GLAI…AWAT), 236–256 (ASEL…FLWF), 263–283 (VFMG…IAVL), 288–308 (LVLV…ILQV), and 338–358 (VIVR…ATLK).

Belongs to the glycosyltransferase 4 family. MraY subfamily. The cofactor is Mg(2+).

It is found in the cell inner membrane. It catalyses the reaction UDP-N-acetyl-alpha-D-muramoyl-L-alanyl-gamma-D-glutamyl-meso-2,6-diaminopimeloyl-D-alanyl-D-alanine + di-trans,octa-cis-undecaprenyl phosphate = di-trans,octa-cis-undecaprenyl diphospho-N-acetyl-alpha-D-muramoyl-L-alanyl-D-glutamyl-meso-2,6-diaminopimeloyl-D-alanyl-D-alanine + UMP. It functions in the pathway cell wall biogenesis; peptidoglycan biosynthesis. Its function is as follows. Catalyzes the initial step of the lipid cycle reactions in the biosynthesis of the cell wall peptidoglycan: transfers peptidoglycan precursor phospho-MurNAc-pentapeptide from UDP-MurNAc-pentapeptide onto the lipid carrier undecaprenyl phosphate, yielding undecaprenyl-pyrophosphoryl-MurNAc-pentapeptide, known as lipid I. This is Phospho-N-acetylmuramoyl-pentapeptide-transferase from Vibrio parahaemolyticus serotype O3:K6 (strain RIMD 2210633).